The sequence spans 545 residues: T-complex protein 1 subunit gamma (545 aa).

M1 carries the post-translational modification N-acetylmethionine. Positions 1 to 24 (MMGHRPVLVLSQNTKRESGRKVQS) are disordered. S11 is modified (phosphoserine). K15 is covalently cross-linked (Glycyl lysine isopeptide (Lys-Gly) (interchain with G-Cter in SUMO2)). Residue G42 coordinates ADP. An ATP-binding site is contributed by G42. Residue D93 participates in Mg(2+) binding. ADP-binding residues include G94, T95, T96, S97, T162, and K163. ATP-binding residues include G94, T95, and T96. S170 bears the Phosphoserine mark. K222 carries the N6-acetyllysine modification. S243 and S244 each carry phosphoserine. Y247 is subject to Phosphotyrosine. Glycyl lysine isopeptide (Lys-Gly) (interchain with G-Cter in SUMO2) cross-links involve residues K248 and K249. S252 is subject to Phosphoserine. A disulfide bridge links C366 with C372. Residue K381 forms a Glycyl lysine isopeptide (Lys-Gly) (interchain with G-Cter in SUMO2) linkage. G411 contributes to the ADP binding site. G411 contacts ATP. Phosphothreonine is present on residues T430 and T459. ADP-binding residues include G482, E483, E497, and K502. G482 lines the ATP pocket. E497 provides a ligand contact to ATP. The interval 526 to 545 (HKKKGDDQSRQGGAPDAGQE) is disordered.

Belongs to the TCP-1 chaperonin family. As to quaternary structure, component of the chaperonin-containing T-complex (TRiC), a hexadecamer composed of two identical back-to-back stacked rings enclosing a protein folding chamber. Each ring is made up of eight different subunits: TCP1/CCT1, CCT2, CCT3, CCT4, CCT5, CCT6A/CCT6, CCT7, CCT8. Interacts with PACRG. Interacts with DNAAF4. Interacts with DLEC1.

The protein localises to the cytoplasm. It carries out the reaction ATP + H2O = ADP + phosphate + H(+). Component of the chaperonin-containing T-complex (TRiC), a molecular chaperone complex that assists the folding of actin, tubulin and other proteins upon ATP hydrolysis. The TRiC complex mediates the folding of WRAP53/TCAB1, thereby regulating telomere maintenance. As part of the TRiC complex may play a role in the assembly of BBSome, a complex involved in ciliogenesis regulating transports vesicles to the cilia. The protein is T-complex protein 1 subunit gamma (CCT3) of Bos taurus (Bovine).